Consider the following 466-residue polypeptide: Acetylornithine aminotransferase, mitochondrial (466 aa).

The residue at position 308 (Lys-308) is an N6-(pyridoxal phosphate)lysine.

The protein belongs to the class-III pyridoxal-phosphate-dependent aminotransferase family. It depends on pyridoxal 5'-phosphate as a cofactor.

The protein localises to the mitochondrion matrix. It carries out the reaction N(2)-acetyl-L-ornithine + 2-oxoglutarate = N-acetyl-L-glutamate 5-semialdehyde + L-glutamate. The protein operates within amino-acid biosynthesis; L-arginine biosynthesis; N(2)-acetyl-L-ornithine from L-glutamate: step 4/4. The sequence is that of Acetylornithine aminotransferase, mitochondrial (ARG8) from Debaryomyces hansenii (strain ATCC 36239 / CBS 767 / BCRC 21394 / JCM 1990 / NBRC 0083 / IGC 2968) (Yeast).